Here is a 283-residue protein sequence, read N- to C-terminus: Digeranylgeranylglyceryl phosphate synthase (283 aa).

The next 8 helical transmembrane spans lie at 21 to 41, 45 to 65, 97 to 117, 135 to 155, 158 to 178, 204 to 224, 226 to 246, and 261 to 281; these read ITAS…EIDI, LLVF…NDIF, LILG…IAVI, IGNF…GVAG, VMPV…REIV, LYFA…PYIL, IFGI…IYAM, and VSKF…VGAI.

The protein belongs to the UbiA prenyltransferase family. DGGGP synthase subfamily. Requires Mg(2+) as cofactor.

The protein localises to the cell membrane. It catalyses the reaction sn-3-O-(geranylgeranyl)glycerol 1-phosphate + (2E,6E,10E)-geranylgeranyl diphosphate = 2,3-bis-O-(geranylgeranyl)-sn-glycerol 1-phosphate + diphosphate. It participates in membrane lipid metabolism; glycerophospholipid metabolism. Its function is as follows. Prenyltransferase that catalyzes the transfer of the geranylgeranyl moiety of geranylgeranyl diphosphate (GGPP) to the C2 hydroxyl of (S)-3-O-geranylgeranylglyceryl phosphate (GGGP). This reaction is the second ether-bond-formation step in the biosynthesis of archaeal membrane lipids. This is Digeranylgeranylglyceryl phosphate synthase from Methanocaldococcus jannaschii (strain ATCC 43067 / DSM 2661 / JAL-1 / JCM 10045 / NBRC 100440) (Methanococcus jannaschii).